A 279-amino-acid chain; its full sequence is 3-methyl-2-oxobutanoate hydroxymethyltransferase (279 aa).

Residues Asp-43 and Asp-82 each coordinate Mg(2+). Residues Asp-43–Ser-44, Asp-82, and Lys-112 contribute to the 3-methyl-2-oxobutanoate site. Glu-114 is a binding site for Mg(2+). The Proton acceptor role is filled by Glu-181.

The protein belongs to the PanB family. As to quaternary structure, homodecamer; pentamer of dimers. Mg(2+) serves as cofactor.

The protein localises to the cytoplasm. The enzyme catalyses 3-methyl-2-oxobutanoate + (6R)-5,10-methylene-5,6,7,8-tetrahydrofolate + H2O = 2-dehydropantoate + (6S)-5,6,7,8-tetrahydrofolate. Its pathway is cofactor biosynthesis; (R)-pantothenate biosynthesis; (R)-pantoate from 3-methyl-2-oxobutanoate: step 1/2. In terms of biological role, catalyzes the reversible reaction in which hydroxymethyl group from 5,10-methylenetetrahydrofolate is transferred onto alpha-ketoisovalerate to form ketopantoate. The chain is 3-methyl-2-oxobutanoate hydroxymethyltransferase from Geobacillus thermodenitrificans (strain NG80-2).